Here is a 393-residue protein sequence, read N- to C-terminus: Staphopain B (393 aa).

Residues 1–36 (MNSSYKSRVFNIISIIMVSMLILSLGAFANNNKAKA) form the signal peptide. The propeptide occupies 37–219 (DSHSKQLEIN…KVEENEAIQE (183 aa)). Catalysis depends on residues Cys243, His340, and Asn360.

The protein belongs to the peptidase C47 family. As to quaternary structure, in the cytoplasm, prematurely activated/folded SspB forms a stable non-covalent complex with SspC. In terms of processing, proteolytically cleaved by staphylococcal serine protease (SspA).

The protein resides in the secreted. With respect to regulation, prematurely activated/folded staphopain B is inhibited by staphostatin B (SspC), which is probably required to protect staphylococcal cytoplasmic proteins from degradation by SspB. Cysteine protease that plays an important role in the inhibition of host innate immune response. Degrades host elastin, fibrogen, fibronectin and kininogen. Blocks phagocytosis of opsonised S.aureus by neutrophils and monocytes by inducing their death in a proteolytic activity-dependent manner. Decreases surface expression of the 'don't eat me' signal CD31 on neutrophils. Cleaves host galectin-3/LGALS3, thereby inhibiting the neutrophil-activating ability of the lectin. The sequence is that of Staphopain B (sspB) from Staphylococcus aureus (strain Mu50 / ATCC 700699).